We begin with the raw amino-acid sequence, 101 residues long: MPFSHTKIVGPAGRYGARYGMGLRRKVTAIEVKQRGKHRCPSCRSLVRLERIAFGIWRCPKCGFTFAGGAWTPQTIMGKALAPEELKEVEAQKAKWKEAVK.

The Zn(2+) site is built by C40, C43, C59, and C62. A C4-type zinc finger spans residues 40 to 62 (CPSCRSLVRLERIAFGIWRCPKC).

Belongs to the eukaryotic ribosomal protein eL43 family. Putative zinc-binding subfamily. As to quaternary structure, part of the 50S ribosomal subunit. Zn(2+) serves as cofactor.

Its function is as follows. Binds to the 23S rRNA. The sequence is that of Large ribosomal subunit protein eL43 from Pyrobaculum aerophilum (strain ATCC 51768 / DSM 7523 / JCM 9630 / CIP 104966 / NBRC 100827 / IM2).